The primary structure comprises 1344 residues: MSGQQQATSVLVFFVNGKKVTDTNPDPECTLLTYLRDKLRLCGTKLGCAEGGCGACTVMISRMDRGQHKIRHLAVNACLTPVCAMHGCAVTTVEGIGSTRTRLHPVQERLAKAHGSQCGFCTPGIVMSMYALLRNAEQPSMRDLEVAFQGNLCRCTGYRPILEGYKTFTKEFLCGMGEKCCRVNGKGCGGGDDPESVTDDTLFERSKFQPLDASQEPIFPPELQLSNAYDSESLVFSSERVTWYRPTTLQELLQLKAAHPAAKLVVGNTEVGVEVKFKHFLYPHLINPTLVAELQEVRESEESIYFGAAVSLMEIDALLRQRIEELPEAQTRLFQCTVDMLHYFAGKQIRNVACLGGNIMTGSPISDMNPVLTAAGARLEVASIVEGKISQRTVHMGTGFFTGYRRNVIEPQEVLLGIHFQKTTPDQHVVAFKQARRRDDDIAIVNAAVNVRFEPKSNVVAEISMAFGGMAPTTVLAPRTSQLMVKQPLDHQLLERVAESLCGELPLAASAPGGMIAYRRALVVSLIFKAYLAISSKLSEAGIIAGDAIPPKERSGAELFHTPTLRSAQLFERVCSDQPVCDPIGRPEVHAAALKQATGEAIYTDDIPRMDGELYLGFVLSTKPRAKITKLDASAALALEGVHAFFSHKDLTVHENEVGPVFHDEHVFAAGEVHCYGQIVGAVAADNKALAQRASRLVRVEYEDLSPVIVTIEQAIEHGSYFPDYPRYVTKGNMAEAFAQAEHTYEGSCRMGGQEHFYLETHAAVAVPRDSDELELFCSTQHPSEVQKLVAHVTSLPAHRVVCRAKRLGGGFGGKESRGISVALPVALAAYRLRRPVRCMLDRDEDMLITGTRHPFLFKYKVAFSSDGLITACDIECYNNAGWSMDLSFSVLERAMYHFENCYHIPNVRVGGWVCKTNLPSNTAFRGFGGPQGMFAGEHIIRDVARIVGRDVLDVMRLNFYRTGDTTHYNQQLEHFPIERCLDDCLTQSRYHERRAEIAKFNRENRWRKRGVAVIPTKYGIAFGVMHLNQAGALLNVYGDGSVLLSHGGVEIGQGLNTKMIQCAARALGIPSELIHISETATDKVPNTSPTAASVGSDINGMAVLDACEKLNKRLAPIKEALPQATWQEWINKAYFDRVSLSATGFYAMPGIGYHPETNPNARTYSYYTNGVGISVVEIDCLTGDHQVLSTDIVMDIGSSINPAIDIGQIEGAFMQGYGLFTLEELMYSPQGMLYSRGPGMYKLPGFADIPGEFNVSLLTGAPNPRAVYSSKAVGEPPLFIGASAFFAIKEAIAAARQEHGLTGDFPLEAPSTSARIRMACQDKFTNLLEVPEAGSFTPWNIVP.

One can recognise a 2Fe-2S ferredoxin-type domain in the interval 9–96; the sequence is SVLVFFVNGK…GCAVTTVEGI (88 aa). The [2Fe-2S] cluster site is built by Cys-48, Cys-53, Cys-56, Cys-78, Cys-118, Cys-121, Cys-153, and Cys-155. The FAD-binding PCMH-type domain occupies 236–425; the sequence is FSSERVTWYR…LGIHFQKTTP (190 aa). FAD-binding positions include 264–271, Phe-344, 354–358, Asp-367, Leu-415, and Lys-433; these read LVVGNTEV and CLGGN. Mo-molybdopterin contacts are provided by Gln-781 and Phe-812. Glu-816 and Arg-894 together coordinate substrate. Residue Arg-926 coordinates Mo-molybdopterin. A substrate-binding site is contributed by Phe-928. Ala-1093 provides a ligand contact to Mo-molybdopterin. The active-site Proton acceptor is the Glu-1276.

The protein belongs to the xanthine dehydrogenase family. Homodimer. The cofactor is FAD. It depends on Mo-molybdopterin as a cofactor. [2Fe-2S] cluster is required as a cofactor.

It is found in the peroxisome. It catalyses the reaction xanthine + NAD(+) + H2O = urate + NADH + H(+). The enzyme catalyses hypoxanthine + NAD(+) + H2O = xanthine + NADH + H(+). Functionally, key enzyme in purine degradation. Catalyzes the oxidation of hypoxanthine to xanthine. Catalyzes the oxidation of xanthine to uric acid. This is Xanthine dehydrogenase (Xdh) from Drosophila subobscura (Fruit fly).